Here is a 150-residue protein sequence, read N- to C-terminus: Macrodomain Ter protein (150 aa).

This sequence belongs to the MatP family. Homodimer.

The protein resides in the cytoplasm. Functionally, required for spatial organization of the terminus region of the chromosome (Ter macrodomain) during the cell cycle. Prevents early segregation of duplicated Ter macrodomains during cell division. Binds specifically to matS, which is a 13 bp signature motif repeated within the Ter macrodomain. The protein is Macrodomain Ter protein of Salmonella typhi.